The chain runs to 420 residues: D-tagatose-1,6-bisphosphate aldolase subunit GatZ (420 aa).

This sequence belongs to the GatZ/KbaZ family. GatZ subfamily. In terms of assembly, forms a complex with GatY.

It participates in carbohydrate metabolism; D-tagatose 6-phosphate degradation; D-glyceraldehyde 3-phosphate and glycerone phosphate from D-tagatose 6-phosphate: step 2/2. Its function is as follows. Component of the tagatose-1,6-bisphosphate aldolase GatYZ that is required for full activity and stability of the Y subunit. Could have a chaperone-like function for the proper and stable folding of GatY. When expressed alone, GatZ does not show any aldolase activity. Is involved in the catabolism of galactitol. The polypeptide is D-tagatose-1,6-bisphosphate aldolase subunit GatZ (Escherichia coli O6:H1 (strain CFT073 / ATCC 700928 / UPEC)).